The chain runs to 144 residues: Na(+)/H(+) antiporter subunit B (144 aa).

4 helical membrane passes run 9 to 31, 41 to 58, 75 to 97, and 117 to 139; these read VLLHTLTRVVTFIILAFSVYLFF, FIGGLMTASALLLMYLGF, IAFGLLIAIFTGFGGLLVGDPYL, and ALPFDLGIYLVVIGIALTIILTI.

The protein belongs to the CPA3 antiporters (TC 2.A.63) subunit B family. As to quaternary structure, forms a heterooligomeric complex that consists of seven subunits: MrpA, MrpB, MrpC, MrpD, MrpE, MrpF and MrpG.

The protein localises to the cell membrane. Functionally, mnh complex is a Na(+)Li(+)/H(+) antiporter involved in Na(+) and/or Li(+) excretion and Na(+) resistance. Na(+)/H(+) antiport consumes a transmembrane electrical potential, and is thus inferred to be electrogenic. Does not transport K(+), Ca(2+) or Mg(2+). In Alkalihalophilus pseudofirmus (strain ATCC BAA-2126 / JCM 17055 / OF4) (Bacillus pseudofirmus), this protein is Na(+)/H(+) antiporter subunit B (mrpB).